The sequence spans 273 residues: Proteasome subunit beta (273 aa).

Polar residues predominate over residues 1-19 (MQESTANKVAANATSSFTE). The disordered stretch occupies residues 1 to 23 (MQESTANKVAANATSSFTEHLQR). Positions 1–50 (MQESTANKVAANATSSFTEHLQRDRPELLPFNRSGQGSATAAAPLQVPHA) are cleaved as a propeptide — removed in mature form; by autocatalysis. T51 serves as the catalytic Nucleophile.

Belongs to the peptidase T1B family. The 20S proteasome core is composed of 14 alpha and 14 beta subunits that assemble into four stacked heptameric rings, resulting in a barrel-shaped structure. The two inner rings, each composed of seven catalytic beta subunits, are sandwiched by two outer rings, each composed of seven alpha subunits. The catalytic chamber with the active sites is on the inside of the barrel. Has a gated structure, the ends of the cylinder being occluded by the N-termini of the alpha-subunits. Is capped by the proteasome-associated ATPase, ARC.

The protein localises to the cytoplasm. The enzyme catalyses Cleavage of peptide bonds with very broad specificity.. It participates in protein degradation; proteasomal Pup-dependent pathway. The formation of the proteasomal ATPase ARC-20S proteasome complex, likely via the docking of the C-termini of ARC into the intersubunit pockets in the alpha-rings, may trigger opening of the gate for substrate entry. Interconversion between the open-gate and close-gate conformations leads to a dynamic regulation of the 20S proteasome proteolysis activity. Component of the proteasome core, a large protease complex with broad specificity involved in protein degradation. The chain is Proteasome subunit beta from Pseudarthrobacter chlorophenolicus (strain ATCC 700700 / DSM 12829 / CIP 107037 / JCM 12360 / KCTC 9906 / NCIMB 13794 / A6) (Arthrobacter chlorophenolicus).